The chain runs to 503 residues: Aspartyl/glutamyl-tRNA(Asn/Gln) amidotransferase subunit B (503 aa).

It belongs to the GatB/GatE family. GatB subfamily. Heterotrimer of A, B and C subunits.

It catalyses the reaction L-glutamyl-tRNA(Gln) + L-glutamine + ATP + H2O = L-glutaminyl-tRNA(Gln) + L-glutamate + ADP + phosphate + H(+). It carries out the reaction L-aspartyl-tRNA(Asn) + L-glutamine + ATP + H2O = L-asparaginyl-tRNA(Asn) + L-glutamate + ADP + phosphate + 2 H(+). In terms of biological role, allows the formation of correctly charged Asn-tRNA(Asn) or Gln-tRNA(Gln) through the transamidation of misacylated Asp-tRNA(Asn) or Glu-tRNA(Gln) in organisms which lack either or both of asparaginyl-tRNA or glutaminyl-tRNA synthetases. The reaction takes place in the presence of glutamine and ATP through an activated phospho-Asp-tRNA(Asn) or phospho-Glu-tRNA(Gln). The sequence is that of Aspartyl/glutamyl-tRNA(Asn/Gln) amidotransferase subunit B from Cereibacter sphaeroides (strain ATCC 17023 / DSM 158 / JCM 6121 / CCUG 31486 / LMG 2827 / NBRC 12203 / NCIMB 8253 / ATH 2.4.1.) (Rhodobacter sphaeroides).